The chain runs to 161 residues: Glycine cleavage system H protein 2 (161 aa).

In terms of domain architecture, Lipoyl-binding spans 34–116 (TVTVGVTDIG…YGEGWIAKLK (83 aa)). Residue Lys75 is modified to N6-lipoyllysine.

It belongs to the GcvH family. As to quaternary structure, the glycine cleavage system is composed of four proteins: P, T, L and H. (R)-lipoate serves as cofactor.

The glycine cleavage system catalyzes the degradation of glycine. The H protein shuttles the methylamine group of glycine from the P protein to the T protein. The protein is Glycine cleavage system H protein 2 of Aquifex aeolicus (strain VF5).